The primary structure comprises 425 residues: MAGDELKGKKRKYRDSHSGDEKSVKILPLSESSLPPLVTTISGFYPPENTRFQLLKKSNQSNRDASLIGRTERVQFEAKNQSTATVEANYCLAVADKTGRVKKIVPAKYLNTFERNILALQEKDKFLKKKHGTVSGTVMEQRANLGLAFGTRKSQKAIMEESANRVKAETLGDVKDQLVSNVQKATEALPTQEDIAAAQAQDRPIPPVNVGAESIEDAYKLEDIIPKEEFSAIYIKPLLENPDERNWAKLLPYRHSLFINERFQRLLSIEEVDQKRARILYYISLLQAFLFSRRSVGNRETLRKKLADPPEILIDGLIKRFTQTTGIGSVQVSSREVDKIICYILVLCLIVDNYSTDVLTLANDLNVKTMKANELFRTVGCRIMAYTETQRMALGLNKTDAKNHKRAVLKIPLEFPKPRRGRARN.

Positions 1-26 (MAGDELKGKKRKYRDSHSGDEKSVKI) are disordered. Residues 15–24 (DSHSGDEKSV) are compositionally biased toward basic and acidic residues.

This sequence belongs to the eukaryotic RPA49/POLR1E RNA polymerase subunit family. As to quaternary structure, component of the RNA polymerase I (Pol I) complex consisting of 14 subunits.

Its subcellular location is the nucleus. The protein resides in the nucleolus. DNA-dependent RNA polymerase catalyzes the transcription of DNA into RNA using the four ribonucleoside triphosphates as substrates. Component of RNA polymerase I which synthesizes ribosomal RNA precursors. This is DNA-directed RNA polymerase I subunit rpa49 (rpa49) from Schizosaccharomyces pombe (strain 972 / ATCC 24843) (Fission yeast).